We begin with the raw amino-acid sequence, 919 residues long: uncharacterized protein (919 aa).

Residues 1–15 (MEALILLSSQQSGSI) show a composition bias toward low complexity. Disordered stretches follow at residues 1-167 (MEAL…DLEN), 179-312 (RFKP…STPS), 415-491 (HIYE…RLSL), 553-739 (QQQQ…TIKP), 751-863 (THNE…NNII), and 883-906 (LNINHQDGPNSASSTPRLPTDHIN). Polar residues predominate over residues 16–25 (KNNCASTSDI). Composition is skewed to low complexity over residues 34–75 (IVIV…SSSS), 96–107 (SSPSSSPNTPKT), and 141–153 (TPTTTSTSTTPIK). The segment covering 154–167 (PVKDPKEKEKDLEN) has biased composition (basic and acidic residues). Over residues 186–292 (NNTNNNNNIN…QQSSPTSSQT (107 aa)) the composition is skewed to low complexity. Polar residues predominate over residues 420–433 (PNENNNGGSFQKPN). Composition is skewed to low complexity over residues 450–471 (GVSGSPSHSPRVSQSPRVPSHP), 553–564 (QQQQQQQQQSSS), 573–589 (SQPQNSSSPRQPSQTPQ), and 618–635 (HMPQSPHMPHSPHLMPHS). A compositionally biased stretch (polar residues) spans 678–695 (YGSSPNLNGGKGSNNFLQ). The span at 712 to 723 (SSVDSYSNSSPT) shows a compositional bias: low complexity. Residues 754-768 (ENYMSSPRQPLSPHN) are compositionally biased toward polar residues. The segment covering 785 to 797 (PHEHCNYIDKNDE) has biased composition (basic and acidic residues). The segment covering 798–863 (YYSNNNNNNN…NNNNNNNNII (66 aa)) has biased composition (low complexity). Residues 883-899 (LNINHQDGPNSASSTPR) show a composition bias toward polar residues.

This is an uncharacterized protein from Dictyostelium discoideum (Social amoeba).